Reading from the N-terminus, the 252-residue chain is Isoprenyl transferase (252 aa).

Aspartate 32 is a catalytic residue. Position 32 (aspartate 32) interacts with Mg(2+). Substrate is bound by residues 33-36 (GNGR), tryptophan 37, arginine 45, histidine 49, and 77-79 (STE). Asparagine 80 functions as the Proton acceptor in the catalytic mechanism. Residues tryptophan 81, arginine 83, arginine 200, and 206–208 (RLS) contribute to the substrate site. Residue glutamate 219 coordinates Mg(2+).

It belongs to the UPP synthase family. Homodimer. Mg(2+) serves as cofactor.

Functionally, catalyzes the condensation of isopentenyl diphosphate (IPP) with allylic pyrophosphates generating different type of terpenoids. This Oceanobacillus iheyensis (strain DSM 14371 / CIP 107618 / JCM 11309 / KCTC 3954 / HTE831) protein is Isoprenyl transferase.